Reading from the N-terminus, the 324-residue chain is tRNA pseudouridine synthase B (324 aa).

Asp49 (nucleophile) is an active-site residue. A disordered region spans residues 87-107; the sequence is RSTDDLEGQPTKTSDKRPSRE.

This sequence belongs to the pseudouridine synthase TruB family. Type 1 subfamily.

The catalysed reaction is uridine(55) in tRNA = pseudouridine(55) in tRNA. Its function is as follows. Responsible for synthesis of pseudouridine from uracil-55 in the psi GC loop of transfer RNAs. In Brucella melitensis biotype 1 (strain ATCC 23456 / CCUG 17765 / NCTC 10094 / 16M), this protein is tRNA pseudouridine synthase B.